A 456-amino-acid polypeptide reads, in one-letter code: Phytase A (456 aa).

The first 24 residues, 1 to 24 (MSSMASVLFAALAISGVQVTPSRG), serve as a signal peptide directing secretion. Residues Gln37, Tyr38, Arg68, His69, Arg72, Thr75, and Arg152 each contribute to the 1D-myo-inositol hexakisphosphate site. Disulfide bonds link Cys58–Cys396, Cys197–Cys450, Cys246–Cys264, and Cys421–Cys429. His69 serves as the catalytic Nucleophile. Position 283 (Lys283) interacts with 1D-myo-inositol hexakisphosphate. The N-linked (GlcNAc...) asparagine glycan is linked to Asn317. 2 residues coordinate 1D-myo-inositol hexakisphosphate: His343 and Asp344. N-linked (GlcNAc...) asparagine glycosylation is present at Asn358.

This sequence belongs to the histidine acid phosphatase family. In terms of assembly, monomer.

Its subcellular location is the secreted. It catalyses the reaction 1D-myo-inositol hexakisphosphate + H2O = 1D-myo-inositol 1,2,4,5,6-pentakisphosphate + phosphate. It carries out the reaction 1D-myo-inositol 1,2,4,5,6-pentakisphosphate + H2O = 1D-myo-inositol 1,2,5,6-tetrakisphosphate + phosphate. The enzyme catalyses 1D-myo-inositol 1,2,5,6-tetrakisphosphate + H2O = 1D-myo-inositol 1,2,6-trisphosphate + phosphate. The catalysed reaction is 1D-myo-inositol 1,2,6-trisphosphate + H2O = 1D-myo-inositol 1,2-bisphosphate + phosphate. It catalyses the reaction 1D-myo-inositol 1,2-bisphosphate + H2O = 1D-myo-inositol 2-phosphate + phosphate. Catalyzes the phosphate monoester hydrolysis of phytic acid (myo-inositol hexakisphosphate), which results in the stepwise formation of myo-inositol pentakis-, tetrakis-, tris-, bis-, and monophosphates, as well as the liberation of inorganic phosphate. Myo-inositol 2-monophosphate is the end product. The sequence is that of Phytase A from Arthroderma benhamiae (strain ATCC MYA-4681 / CBS 112371) (Trichophyton mentagrophytes).